A 725-amino-acid chain; its full sequence is Sodium/hydrogen exchanger 7 (725 aa).

Residues 1 to 20 are disordered; it reads MEPGDAARPGSGRATGAPPP. Residues 1 to 21 are Cytoplasmic-facing; it reads MEPGDAARPGSGRATGAPPPR. Residues 22–42 traverse the membrane as a helical segment; sequence LLLLPLLLGWGLRVAAAASAS. Residues 43–70 are Lumenal-facing; sequence SSGAAAEDSSAMEELATEKEAEESHRQD. Residues 71–91 form a helical membrane-spanning segment; the sequence is SVSLLTFILLLTLTILTIWLF. The Cytoplasmic segment spans residues 92-95; that stretch reads KHRR. Residues 96-116 traverse the membrane as a helical segment; that stretch reads VRFLHETGLAMIYGLIVGVIL. The Lumenal segment spans residues 117 to 175; that stretch reads RYGTPATSGRDKSLSCTQEDRAFSTLLVNVSGKFFEYTLKGEISPGKINSVEQNDMLRK. The N-linked (GlcNAc...) asparagine glycan is linked to Asn145. The helical transmembrane segment at 176-196 threads the bilayer; the sequence is VTFDPEVFFNILLPPIIFHAG. Topologically, residues 197-210 are cytoplasmic; that stretch reads YSLKKRHFFRNLGS. The helical transmembrane segment at 211-231 threads the bilayer; it reads ILAYAFLGTAVSCFIIGNLMY. Residues 232–251 lie on the Lumenal side of the membrane; the sequence is GVVKLMKIMGQLSDKFYYTD. Residues 252–272 traverse the membrane as a helical segment; that stretch reads CLFFGAIISATDPVTVLAIFN. At 273–277 the chain is on the cytoplasmic side; sequence ELHAD. The chain crosses the membrane as a helical span at residues 278 to 298; the sequence is VDLYALLFGESVLNDAVAIVL. Residues 299–322 lie on the Lumenal side of the membrane; sequence SSSIVAYQPAGLNTHAFDAAAFFK. A helical transmembrane segment spans residues 323-343; sequence SVGIFLGIFSGSFTMGAVTGV. Residues 344 to 349 are Cytoplasmic-facing; that stretch reads NANVTK. 2 helical membrane passes run 350-370 and 371-391; these read FTKLHCFPLLETALFFLMSWS and TFLLAEACGFTGVVAVLFCGI. The Cytoplasmic segment spans residues 392-414; that stretch reads TQAHYTYNNLSVESRSRTKQLFE. A helical membrane pass occupies residues 415–435; sequence VLHFLAENFIFSYMGLALFTF. Residues 436 to 442 are Lumenal-facing; that stretch reads QKHVFSP. Residues 443-463 form a helical membrane-spanning segment; the sequence is IFIIGAFVAIFLGRAAHIYPL. The Cytoplasmic segment spans residues 464–474; the sequence is SFFLNLGRRHK. A helical membrane pass occupies residues 475–497; it reads IGWNFQHMMMFSGLRGAMAFALA. Residues 498–513 are Lumenal-facing; it reads IRDTASYARQMMFTTT. The chain crosses the membrane as a helical span at residues 514–534; that stretch reads LLIVFFTVWIIGGGTTPMLSW. Required for trans-Golgi network localization regions lie at residues 533 to 559 and 563 to 568; these read SWLNIRVGVEEPSEEDQNEHHWQYFRV and PDQDPP. At 535–725 the chain is on the cytoplasmic side; the sequence is LNIRVGVEEP…RLVFPLEDNA (191 aa). Ser545 is modified (phosphoserine). Disordered regions lie at residues 567–590 and 669–714; these read PPPNNDSFQVLQGDGPDSARGNRT and TVTA…SSRG. The span at 675–684 shows a compositional bias: low complexity; the sequence is SSSSHTASTS. Positions 687–704 are enriched in basic and acidic residues; the sequence is GSRRTKSSSEEVLERDLG.

Belongs to the monovalent cation:proton antiporter 1 (CPA1) transporter (TC 2.A.36) family. Interacts with SCAMP1, SCAMP2 and SCAMP5; may participate in its shuttling from trans-Golgi network to recycling endosomes. In terms of processing, N-glycosylated. As to expression, ubiquitously expressed.

It localises to the golgi apparatus. Its subcellular location is the trans-Golgi network membrane. It is found in the recycling endosome membrane. The protein localises to the cell membrane. It catalyses the reaction Na(+)(in) + H(+)(out) = Na(+)(out) + H(+)(in). It carries out the reaction K(+)(in) + H(+)(out) = K(+)(out) + H(+)(in). Its activity is regulated as follows. Inhibited by benzamil and quinine but not by amiloride. Functionally, golgi Na(+), K(+)/(H+) antiporter. Mediates the electoneutral influx of Na(+) or K(+) in exchange for H(+). May contribute to the regulation of Golgi apparatus volume and pH. This Homo sapiens (Human) protein is Sodium/hydrogen exchanger 7 (SLC9A7).